The primary structure comprises 521 residues: MSMSHPVSQSADKVIDHFTLFRQPEYKELFERKKTEFEYGPTPTKEVARVSAWTKTEEYKEKNLPVEAVVINPTKACQPIGAMLAAQGFEGTLPFVHGSQGCVSYYRTHLTRHFKEPNSAVSSSMTEDAAVFGGLNNMIDGLQRYALYKPKMIAVLTTCMAEVIGDDLSGFINNAKNKESVPADFPVPFAHTPAFVGSHIVGYDNMIKGVLTHFWGTSENFDTPKNETINLIPGFDGFAVGNNRELKRIAGLFGIQMTILSDVSDNFDTPADGEYRMYDGGTPLEATKEAVHAKATISMQEYCTPQSLQFIKREGPAGRQAYNYPMGVTGTDELLMKLAELSGKPSRGVKLERGRLVDAIADSHTHLHGKRFAVYGDPDFCLGMSKFLMELGAEPVHILSTSGSKKWEKQVQKVLDACRSASSGKAYGAKDLWHLRSLVFTDKVDYIIGNSYGKYLERDTKIPLIRLTYPIFDRHHHHRYPTWGYQGALNVLVRILDRIFEDMDANTNIVGETDYSFDLVR.

C77, C102, and C159 together coordinate [8Fe-7S] cluster.

This sequence belongs to the NifD/NifK/NifE/NifN family. As to quaternary structure, tetramer of two alpha and two beta chains. Forms complex with the iron protein (nitrogenase component 2). It depends on [8Fe-7S] cluster as a cofactor.

It carries out the reaction N2 + 8 reduced [2Fe-2S]-[ferredoxin] + 16 ATP + 16 H2O = H2 + 8 oxidized [2Fe-2S]-[ferredoxin] + 2 NH4(+) + 16 ADP + 16 phosphate + 6 H(+). Its function is as follows. This molybdenum-iron protein is part of the nitrogenase complex that catalyzes the key enzymatic reactions in nitrogen fixation. The protein is Nitrogenase molybdenum-iron protein beta chain (nifK) of Azospirillum brasilense.